A 210-amino-acid chain; its full sequence is MTMSHASPDAARSRIVLASNNPGKLREFAALFSTAGIDIVPQGELGVSEADEPHATFVENALAKARHASRATGLPAVADDSGLCVPALLGAPGVYSARYAQRAGREKSDAANNAYLVEQLREVADRRAYYYCVLALVRHADDPEPLIAEGRWAGEIVDAPRGAHGFGYDPHFFVPALGATAAELDPAAKNAASHRALALKALVARLGEIR.

Ser19–Lys24 provides a ligand contact to substrate. Mg(2+)-binding residues include Asp51 and Asp80. The Proton acceptor role is filled by Asp80. Residues Ser81, Phe166–Asp169, Lys189, and His194–Arg195 contribute to the substrate site.

Belongs to the HAM1 NTPase family. Homodimer. Mg(2+) is required as a cofactor.

It catalyses the reaction XTP + H2O = XMP + diphosphate + H(+). The catalysed reaction is dITP + H2O = dIMP + diphosphate + H(+). The enzyme catalyses ITP + H2O = IMP + diphosphate + H(+). Pyrophosphatase that catalyzes the hydrolysis of nucleoside triphosphates to their monophosphate derivatives, with a high preference for the non-canonical purine nucleotides XTP (xanthosine triphosphate), dITP (deoxyinosine triphosphate) and ITP. Seems to function as a house-cleaning enzyme that removes non-canonical purine nucleotides from the nucleotide pool, thus preventing their incorporation into DNA/RNA and avoiding chromosomal lesions. This chain is dITP/XTP pyrophosphatase, found in Burkholderia mallei (strain ATCC 23344).